Reading from the N-terminus, the 123-residue chain is uncharacterized protein (123 aa).

The 101-residue stretch at 17–117 (LNNNAFLVDV…NNQDKGWKQN (101 aa)) folds into the Rhodanese domain.

This is an uncharacterized protein from Rickettsia prowazekii (strain Madrid E).